The primary structure comprises 907 residues: Protein translocase subunit SecA (907 aa).

ATP is bound by residues Q87, 105–109, and D510; that span reads GEGKT. The Zn(2+) site is built by C892, C894, C903, and H904.

This sequence belongs to the SecA family. In terms of assembly, monomer and homodimer. Part of the essential Sec protein translocation apparatus which comprises SecA, SecYEG and auxiliary proteins SecDF-YajC and YidC. It depends on Zn(2+) as a cofactor.

The protein resides in the cell inner membrane. Its subcellular location is the cytoplasm. It catalyses the reaction ATP + H2O + cellular proteinSide 1 = ADP + phosphate + cellular proteinSide 2.. Its function is as follows. Part of the Sec protein translocase complex. Interacts with the SecYEG preprotein conducting channel. Has a central role in coupling the hydrolysis of ATP to the transfer of proteins into and across the cell membrane, serving both as a receptor for the preprotein-SecB complex and as an ATP-driven molecular motor driving the stepwise translocation of polypeptide chains across the membrane. In Acinetobacter baumannii (strain AB0057), this protein is Protein translocase subunit SecA.